Here is a 62-residue protein sequence, read N- to C-terminus: Sauvatide (62 aa).

Residues 1–24 (MDILKKSLFLILFLGLVSISFCDG) form the signal peptide. The propeptide occupies 25 to 46 (EKRQDDDEANESEEKKEIHEVE). At Lys58 the chain carries Lysine amide.

In terms of tissue distribution, expressed by the skin glands.

Its subcellular location is the secreted. Functionally, induces contraction of smooth muscle in isolated rat urinary bladder with an EC(50) value of 2.2nM. The polypeptide is Sauvatide (Phyllomedusa sauvagei (Sauvage's leaf frog)).